The sequence spans 436 residues: F-box/LRR-repeat protein 20 (436 aa).

Residues 22-68 (AVINKKLPKELLLRIFSFLDVVTLCRCAQVSRAWNVLALDGSNWQRI) form the F-box domain. LRR repeat units lie at residues 74 to 100 (QRDIEGRVVENISKRCGGFLRKLSLRG), 101 to 126 (CLGVGDNALRTFAQNCRNIEVLNLNG), 127 to 152 (CTKTTDATCTSLSKFCSKLRHLDLAS), 153 to 178 (CTSITNMSLKALSEGCPLLEQLNISW), 179 to 204 (CDQVTKDGIQALVRGCGGLKALFLKG), 205 to 230 (CTQLEDEALKYIGAHCPELVTLNLQT), 231 to 256 (CLQITDEGLITICRGCHKLQSLCASG), 257 to 282 (CSNITDAILNALGQNCPRLRILEVAR), 283 to 308 (CSQLTDVGFTTLARNCHELEKMDLEE), 309 to 334 (CVQITDSTLIQLSIHCPRLQVLSLSH), 335 to 363 (CELITDDGIRHLGNGACAHDQLEVIELDN), 364 to 388 (CPLITDASLEHLKSCHSLERIELYD), and 389 to 414 (CQQITRAGIKRLRTHLPNIKVHAYFA). Position 417 is a phosphothreonine (threonine 417). The residue at position 421 (serine 421) is a Phosphoserine.

Interacts with SKP1 and CUL1.

The protein resides in the cytoplasm. Its function is as follows. Substrate-recognition component of the SCF (SKP1-CUL1-F-box protein)-type E3 ubiquitin ligase complex. Role in neural transmission. The protein is F-box/LRR-repeat protein 20 (FBXL20) of Bos taurus (Bovine).